Here is a 155-residue protein sequence, read N- to C-terminus: SsrA-binding protein (155 aa).

The protein belongs to the SmpB family.

It localises to the cytoplasm. In terms of biological role, required for rescue of stalled ribosomes mediated by trans-translation. Binds to transfer-messenger RNA (tmRNA), required for stable association of tmRNA with ribosomes. tmRNA and SmpB together mimic tRNA shape, replacing the anticodon stem-loop with SmpB. tmRNA is encoded by the ssrA gene; the 2 termini fold to resemble tRNA(Ala) and it encodes a 'tag peptide', a short internal open reading frame. During trans-translation Ala-aminoacylated tmRNA acts like a tRNA, entering the A-site of stalled ribosomes, displacing the stalled mRNA. The ribosome then switches to translate the ORF on the tmRNA; the nascent peptide is terminated with the 'tag peptide' encoded by the tmRNA and targeted for degradation. The ribosome is freed to recommence translation, which seems to be the essential function of trans-translation. The protein is SsrA-binding protein of Streptococcus pyogenes serotype M18 (strain MGAS8232).